We begin with the raw amino-acid sequence, 560 residues long: Membrane-bound O-acyltransferase GUP1 (560 aa).

Over 1–43 (MSLISILSPLITSEGLDSRIKPSPKKDASTTTKPSLWKTTEFK) the chain is Extracellular. Residues 44-64 (FYYIAFLVVVPLMFYAGLQAS) traverse the membrane as a helical segment. Residues 65 to 101 (SPENPNYARYERLLSQGWLFGRKVDNSDSQYRFFRDN) are Cytoplasmic-facing. A helical membrane pass occupies residues 102-122 (FALLSVLMLVHTSIKRIVLYS). At 123–131 (TNITKLRFD) the chain is on the extracellular side. Residues 132-152 (LIFGLIFLVAAHGVNSIRILA) form a helical membrane-spanning segment. Over 153-165 (HMLILYAIAHVLK) the chain is Cytoplasmic. The chain crosses the membrane as a helical span at residues 166-185 (NFRRIATISIWIYGISTLFI). Topologically, residues 186 to 276 (NDNFRAYPFG…AAHPIQDYSL (91 aa)) are extracellular. The chain crosses the membrane as a helical span at residues 277-297 (MNYIAYVTYTPLFIAGPIITF). Residues 298–322 (NDYVYQSKHTLPSINFKFIFYYAVR) lie on the Cytoplasmic side of the membrane. A helical transmembrane segment spans residues 323–343 (FVIALLSMEFILHFLHVVAIS). Over 344–352 (KTKAWENDT) the chain is Extracellular. The chain crosses the membrane as a helical span at residues 353-373 (PFQISMIGLFNLNIIWLKLLI). Topologically, residues 374–432 (PWRLFRLWALLDGIDTPENMIRCVDNNYSSLAFWRAWHRSYNKWVVRYIYIPLGGSKNR) are cytoplasmic. The next 2 helical transmembrane spans lie at 433–453 (VLTS…ELKL) and 454–474 (LLWG…TQIF). Residue His447 is part of the active site. The Cytoplasmic portion of the chain corresponds to 475–485 (SHYTDAVWYRH). The helical transmembrane segment at 486–506 (VCAVGAVFNIWVMMIANLFGF) threads the bilayer. The Extracellular segment spans residues 507-526 (CLGSDGTKKLLSDMFCTVSG). A helical transmembrane segment spans residues 527-547 (FKFVILASVSLFIAVQIMFEI). At 548-560 (REEEKRHGIYLKC) the chain is on the cytoplasmic side.

This sequence belongs to the membrane-bound acyltransferase family. Interacts with mitochondrial outer membrane voltage-dependent anion channel (VDAC) POR1.

The protein localises to the cell membrane. It is found in the endoplasmic reticulum membrane. It localises to the mitochondrion membrane. Its function is as follows. Membrane-bound O-acyltransferase involved in the remodeling of glycosylphosphatidylinositol (GPI) anchors. Acts only on GPI-anchored proteins, but not on free GPI lipids. Acts as an acyltransferase for GPI anchors that adds C26 fatty acids to the sn2 position of lyso-PI-containing GPI anchors. PER1 first deacylates, GUP1 subsequently reacylates the anchor lipid, thus replacing a shorter fatty acid (C16:0 or C18:0) by C26:0. Also involved in lipid metabolism, having profound effects on sphingolipid-sterol-ordered domains integrity and assembly. Together with GUP2, has an influence on the chemical composition of the yeast extracellular matrix (yECM) in yeast multicellular aggregates, such as biofilms and colonies. Involved in cell integrity and apoptosis. The chain is Membrane-bound O-acyltransferase GUP1 (GUP1) from Saccharomyces cerevisiae (strain ATCC 204508 / S288c) (Baker's yeast).